The chain runs to 877 residues: DNA repair protein rad16 (877 aa).

Ser71 carries the phosphoserine; by CK2 modification. Positions 440-490 are disordered; that stretch reads SKSIKKPEPSKEREASNTTSRKGVPPSKRRRVRGGNNATSRTTSDNTDAND. The segment covering 444 to 454 has biased composition (basic and acidic residues); that stretch reads KKPEPSKEREA. Residues 475-490 are compositionally biased toward polar residues; sequence NNATSRTTSDNTDAND. The ERCC4 domain maps to 652 to 732; that stretch reads RVIVDLREFR…IPVLLIEFEQ (81 aa).

It belongs to the XPF family. In terms of assembly, heterodimer composed of rad16 and swi10.

It is found in the nucleus. Its subcellular location is the cytoplasm. The protein localises to the cytoskeleton. It localises to the microtubule organizing center. The protein resides in the spindle pole body. Its function is as follows. Endonuclease that specifically degrades single-stranded DNA and which is involved in nucleotide excision repair of DNA damaged with UV light, bulky adducts, or cross-linking agents. Required for double strand break-induced interchromosomal gene conversion. The sequence is that of DNA repair protein rad16 (rad16) from Schizosaccharomyces pombe (strain 972 / ATCC 24843) (Fission yeast).